A 358-amino-acid polypeptide reads, in one-letter code: DNA integrity scanning protein DisA (358 aa).

One can recognise a DAC domain in the interval 6–144; the sequence is RPTLREAVAR…RGERHVLTDS (139 aa). ATP contacts are provided by residues glycine 73, leucine 91, and 104 to 108; that span reads TRHRS.

Belongs to the DisA family. As to quaternary structure, homooctamer. Requires Mg(2+) as cofactor.

It catalyses the reaction 2 ATP = 3',3'-c-di-AMP + 2 diphosphate. Its function is as follows. Participates in a DNA-damage check-point. DisA forms globular foci that rapidly scan along the chromosomes searching for lesions. In terms of biological role, also has diadenylate cyclase activity, catalyzing the condensation of 2 ATP molecules into cyclic di-AMP (c-di-AMP). c-di-AMP likely acts as a signaling molecule that may couple DNA integrity with a cellular process. In Mycobacterium bovis (strain ATCC BAA-935 / AF2122/97), this protein is DNA integrity scanning protein DisA.